The chain runs to 278 residues: Envelope glycoprotein L (278 aa).

Positions 1 to 30 (MCRRPDCGFSFSPGPVILLWCCLLLPIVSS) are cleaved as a signal peptide. A gL betaherpesvirus-type domain is found at 43–256 (VPAECPELTR…DKYYAGLPPE (214 aa)). C154 and C159 are joined by a disulfide.

This sequence belongs to the herpesviridae glycoprotein L (gL) family. Betaherpesvirinae gL subfamily. In terms of assembly, interacts with glycoprotein H (gH); this interaction is necessary for the correct processing and cell surface expression of gH. Forms the envelope pentamer complex (PC) composed of gH, gL, UL128, UL130, and UL131A. The pentamer interacts with host NRP2. Forms the envelope trimer complex composed of gH, gL, and gO. The trimer interacts with host PDGFRA. The trimer also interacts with host EPHA2.

The protein resides in the virion membrane. It is found in the host cell membrane. Its subcellular location is the host Golgi apparatus. It localises to the host trans-Golgi network. The heterodimer glycoprotein H-glycoprotein L is required for the fusion of viral and plasma membranes leading to virus entry into the host cell. Acts as a functional inhibitor of gH and maintains gH in an inhibited form. Upon binding to host integrins, gL dissociates from gH leading to activation of the viral fusion glycoproteins gB and gH. In human cytomegalovirus, forms two distincts complexes to mediate viral entry, a trimer and a pentamer at the surface of the virion envelope. The gH-gL-gO trimer is required for infection in fibroblasts by interacting with host PDGFRA, and in glioblastoma cells by interacting with host EPHA2. The gH-gL-UL128-UL130-UL131A pentamer is essential for viral entry in epithelial, endothelial and myeloid cells via interaction with host NRP2. This Homo sapiens (Human) protein is Envelope glycoprotein L.